Consider the following 327-residue polypeptide: cAMP-dependent protein kinase regulatory subunit (327 aa).

The interval 1-47 (MTNNISHNQKATEKVEAQNNNNITRKRRGAISSEPLGDKPATPLPNI) is disordered. The dimerization and phosphorylation stretch occupies residues 1–65 (MTNNISHNQK…RLEQALSNNI (65 aa)). Residues 27–31 (RRGAI) carry the Pseudophosphorylation motif motif. Residue S32 is modified to Phosphoserine. 3',5'-cyclic AMP-binding positions include 66–188 (MFSH…EKVS), E136, R145, 189–327 (ILRH…SQKS), E262, and R271.

The protein belongs to the cAMP-dependent kinase regulatory chain family. As to quaternary structure, in Dictyostelium the holoenzyme is a dimer composed of a regulatory (R) and a catalytic (C) subunit. In the presence of cAMP it dissociates into the active C subunit and an R monomer. In other eukaryotes the holoenzyme is a tetramer composed of 2 regulatory (R) and 2 catalytic (C) subunits. In the presence of cAMP it dissociates into active monomeric C subunits and an R dimer. Post-translationally, the pseudophosphorylation site binds to the substrate-binding region of the catalytic chain but is not phosphorylated. The physiological significance of phosphorylations by other kinases is unclear.

The protein is cAMP-dependent protein kinase regulatory subunit (pkaR) of Dictyostelium discoideum (Social amoeba).